The primary structure comprises 550 residues: MSPSSTTTCTSLLEELQMIWDEIGESYNERDKMLLELEQECLDIYNKKVEKTRKFRAELQRSLAQAEAEIASLMSALGEKVSFAKKEGSLKEQISSVKPVLEDLLMKKDRRRKELSETLNQIAEITSNIAGNDYTVSSGSEVDESDLTQRKLDELRADLQDLRNEKAVRLQKVNSYISAVHELSEILSFDFSKALNSVHSSLTEFSKTHSKSISNDTLARFTELVKSLKAEKHERLLKLQGLGRSMQELWNLMETPMDERRRFDHCSSLLSSLPDDALKKGCLSLDIIREAEDEVRRLNSLKSSKMKELVFKRQCELEEICRGNHMDINSDAARKSLVELIESGDGDLSDILASIDGQIEKAREEALSRKEILDKVDKWRHAKEEETWLDDYEKDENRFSAVRGAHKNLKRAEKARSLISKIPAMVDVLTTKVKAWEKERGVPFLCDKQPLLQTLEDDIVIRAQREEEKRQFREQKRLQGQLATEKEAKYGSKSAKKKPLGQSLNTDNVTKTPIGRRIGNTPGRSVTSGGKDYRGNAVIPLNYVALQKDD.

Coiled coils occupy residues 46–174 and 288–310; these read NKKV…QKVN and IREAEDEVRRLNSLKSSKMKELV. The interval 471–531 is disordered; the sequence is QFREQKRLQG…PGRSVTSGGK (61 aa). Positions 502 to 511 are enriched in polar residues; that stretch reads QSLNTDNVTK.

It belongs to the MAP65/ASE1 family. Forms a dimer. Binds to MT, mostly with coaligned MT, both between parallel or antiparallel, forming thick bundles. Bundles polymerized MT via the formation of 25-nm crossbridges with cortical MT.

The protein localises to the nucleus. It localises to the cytoplasm. The protein resides in the cytoskeleton. It is found in the spindle. Its subcellular location is the phragmoplast. The protein localises to the cell cortex. It localises to the cell junction. The protein resides in the plasmodesma. Microtubule-associated protein that bundle and stabilize adjacent microtubules (MT) of the cell cortex. Confers MT resistance to the drug oryzalin. Promotes the formation of a planar network of antiparallel microtubules. The protein is 65-kDa microtubule-associated protein 5 (MAP65-5) of Arabidopsis thaliana (Mouse-ear cress).